Reading from the N-terminus, the 48-residue chain is Sperm protamine P1 (48 aa).

This sequence belongs to the protamine P1 family. In terms of tissue distribution, testis.

The protein resides in the nucleus. The protein localises to the chromosome. Functionally, protamines substitute for histones in the chromatin of sperm during the haploid phase of spermatogenesis. They compact sperm DNA into a highly condensed, stable and inactive complex. The chain is Sperm protamine P1 (PRM1) from Murina cyclotis (Round-eared tube-nosed bat).